We begin with the raw amino-acid sequence, 523 residues long: Leucine-rich repeat transmembrane neuronal protein 1 (523 aa).

An N-terminal signal peptide occupies residues 1-34 (MDFLLLGLCLHWLLRRPSGVVLCLLGACFQMLPA). Residues 35–63 (APSGCPGQCRCEGRLLYCEALNLTEAPHN) form the LRRNT domain. Residues 35–428 (APSGCPGQCR…HAENAVQIHK (394 aa)) are Extracellular-facing. N-linked (GlcNAc...) asparagine glycosylation is found at N56 and N63. LRR repeat units follow at residues 64-87 (LSGL…QFTG), 89-111 (MQLT…AFQK), 112-135 (LRRV…TFRP), 136-159 (MPNL…LFHG), 161-183 (RKLT…IFQD), 184-207 (CRSL…SFAG), 209-231 (FKLT…HFPR), 233-255 (ISLN…LDWV), 256-278 (WNLE…VFET), and 280-302 (PYLQ…ILNS). N-linked (GlcNAc...) asparagine glycosylation is present at N130. The 52-residue stretch at 314–365 (NLWDCGRNVCALASWLSNFQGRYDANLQCASPEYAQGEDVLDAVYAFHLCED) folds into the LRRCT domain. N381 is a glycosylation site (N-linked (GlcNAc...) asparagine). A helical transmembrane segment spans residues 429 to 449 (VVTGTMALIFSFLIVVLVLYV). The Cytoplasmic segment spans residues 450–523 (SWKCFPASLR…HQQPARECEV (74 aa)). The short motif at 520 to 523 (ECEV) is the May be involved in DLG4-binding element.

Belongs to the LRRTM family. In terms of assembly, interacts with DLG4.

The protein localises to the cell membrane. It is found in the postsynaptic cell membrane. Exhibits strong synaptogenic activity, restricted to excitatory presynaptic differentiation, acting at both pre- and postsynaptic level. The protein is Leucine-rich repeat transmembrane neuronal protein 1 (Lrrtm1) of Rattus norvegicus (Rat).